Here is a 400-residue protein sequence, read N- to C-terminus: Carnosine N-methyltransferase (400 aa).

A disordered region spans residues 1–49; it reads MQRRRRAPPASQPAQDSGHSEEVEVQFSAGRLGSAAPAGPPVRGTAEDE. The S-adenosyl-L-methionine site is built by Q155, R158, G199, E220, D286, F287, and C303. D307 lines the carnosine pocket. Y315 contributes to the S-adenosyl-L-methionine binding site. H338 and Y389 together coordinate carnosine.

The protein belongs to the carnosine N-methyltransferase family. Homodimer. Each monomer accommodates one molecule of carnosine in its active pocket, precisely anchoring the histidine imidazole ring such that only N1 is exposed and deprotonated for methylation. Expressed at higher level in skeletal muscle compared to other tissues.

The protein resides in the cytoplasm. The protein localises to the cytosol. It is found in the nucleus. It catalyses the reaction carnosine + S-adenosyl-L-methionine = anserine + S-adenosyl-L-homocysteine + H(+). Functionally, N-methyltransferase that catalyzes the formation of anserine (beta-alanyl-N(Pi)-methyl-L-histidine) from carnosine. Anserine, a methylated derivative of carnosine (beta-alanyl-L-histidine), is an abundant constituent of vertebrate skeletal muscles. Also methylates other L-histidine-containing di- and tripeptides such as Gly-Gly-His, Gly-His and homocarnosine (GABA-His). The polypeptide is Carnosine N-methyltransferase (Rattus norvegicus (Rat)).